The sequence spans 345 residues: Viral Fc-gamma receptor-like protein UL119 (345 aa).

Residues 1–23 (MCSVLAIALVVALLGDMHPGVKS) form the signal peptide. Positions 23-42 (SSTTSAVTSPSNTTVTSTTS) are disordered. Topologically, residues 24–294 (STTSAVTSPS…KSDPLFEDRL (271 aa)) are virion surface. Residues asparagine 34, asparagine 48, asparagine 95, asparagine 104, asparagine 148, asparagine 179, asparagine 198, asparagine 217, asparagine 225, asparagine 241, asparagine 244, and asparagine 260 are each glycosylated (N-linked (GlcNAc...) asparagine; by host). The Ig-like V-type domain occupies 91 to 190 (QVSLNATCKV…TWDLFTYPIY (100 aa)). A helical transmembrane segment spans residues 295-317 (LAYGVLAFLVFMVIILLYVTYML). At 318-345 (ARRRDWSYKRLEEPVEEKKHPVPYFKQW) the chain is on the intravirion side.

It is found in the virion membrane. In terms of biological role, serves as a receptor for the Fc part of human IgG. May thus be involved in interfering with host Ig-mediated immune responses. This chain is Viral Fc-gamma receptor-like protein UL119 (UL119/UL118), found in Human cytomegalovirus (strain AD169) (HHV-5).